The sequence spans 212 residues: Uridine kinase (212 aa).

Residue Gly-13–Thr-20 coordinates ATP.

This sequence belongs to the uridine kinase family.

The protein resides in the cytoplasm. It catalyses the reaction uridine + ATP = UMP + ADP + H(+). It carries out the reaction cytidine + ATP = CMP + ADP + H(+). It participates in pyrimidine metabolism; CTP biosynthesis via salvage pathway; CTP from cytidine: step 1/3. It functions in the pathway pyrimidine metabolism; UMP biosynthesis via salvage pathway; UMP from uridine: step 1/1. In Bacillus anthracis (strain A0248), this protein is Uridine kinase.